A 345-amino-acid polypeptide reads, in one-letter code: tRNA pseudouridine synthase B (345 aa).

Asp-39 acts as the Nucleophile in catalysis.

It belongs to the pseudouridine synthase TruB family. Type 1 subfamily.

The enzyme catalyses uridine(55) in tRNA = pseudouridine(55) in tRNA. In terms of biological role, responsible for synthesis of pseudouridine from uracil-55 in the psi GC loop of transfer RNAs. In Rickettsia africae (strain ESF-5), this protein is tRNA pseudouridine synthase B.